We begin with the raw amino-acid sequence, 258 residues long: Short-chain dehydrogenase reductase 3c (258 aa).

12 to 36 (IITGGASGIGADAARLFTDHGAKVV) contributes to the NAD(+) binding site. Position 144 (Ser-144) interacts with substrate. Residue Tyr-156 is the Proton acceptor of the active site.

It belongs to the short-chain dehydrogenases/reductases (SDR) family.

The protein is Short-chain dehydrogenase reductase 3c (SDR3c) of Arabidopsis thaliana (Mouse-ear cress).